The primary structure comprises 449 residues: Alginate biosynthesis transcriptional regulatory protein AlgB (449 aa).

Residues 10–124 enclose the Response regulatory domain; the sequence is RILLVDDESA…QLRLAAAKQL (115 aa). Aspartate 59 is modified (4-aspartylphosphate). Positions 147 to 376 constitute a Sigma-54 factor interaction domain; the sequence is LESHSPAMAA…LRNVIERASI (230 aa). Residues 175 to 182 and 238 to 247 each bind ATP; these read GESGSGKG and ADGGTLFLDE. The segment at residues 426–445 is a DNA-binding region (H-T-H motif); that stretch reads LDQAAKTLGIDASTLYRKRK.

Phosphorylated by KinB.

The protein operates within glycan biosynthesis; alginate biosynthesis [regulation]. Functionally, member of the two-component regulatory system AlgB/KinB involved in regulation of alginate biosynthesis genes. Positive regulator of the alginate biosynthetic gene AlgD. This Pseudomonas aeruginosa (strain ATCC 15692 / DSM 22644 / CIP 104116 / JCM 14847 / LMG 12228 / 1C / PRS 101 / PAO1) protein is Alginate biosynthesis transcriptional regulatory protein AlgB (algB).